The sequence spans 343 residues: Nod factor export ATP-binding protein I (343 aa).

The segment covering 1–14 has biased composition (polar residues); sequence MQLLTRANVSSSPS. Positions 1 to 38 are disordered; sequence MQLLTRANVSSSPSRRPESNALKQKCHGHSNADNSLSR. Residues 45–275 enclose the ABC transporter domain; sequence IELTNVSKSY…QIGCDVIEIY (231 aa). 77-84 is a binding site for ATP; sequence GPNGAGKS.

It belongs to the ABC transporter superfamily. Lipooligosaccharide exporter (TC 3.A.1.102) family. As to quaternary structure, the complex is composed of two ATP-binding proteins (NodI) and two transmembrane proteins (NodJ).

Its subcellular location is the cell inner membrane. Functionally, part of the ABC transporter complex NodIJ involved in the export of the nodulation factors (Nod factors), the bacterial signal molecules that induce symbiosis and subsequent nodulation induction. Nod factors are LCO (lipo-chitin oligosaccharide), a modified beta-1,4-linked N-acetylglucosamine oligosaccharide. This subunit is responsible for energy coupling to the transport system. This chain is Nod factor export ATP-binding protein I, found in Sinorhizobium fredii (strain NBRC 101917 / NGR234).